The chain runs to 624 residues: Laccase-1 (624 aa).

The N-terminal stretch at 1 to 20 (MRGLAKLFFLSCSFVSLVSS) is a signal peptide. 2 consecutive Plastocyanin-like domains span residues 72 to 183 (FASP…HSPN) and 195 to 343 (DRIV…CMFG). Positions 117 and 119 each coordinate Cu cation. Residues C138 and C578 are joined by a disulfide bond. The N-linked (GlcNAc...) asparagine glycan is linked to N149. Residues H162 and H164 each coordinate Cu cation. N-linked (GlcNAc...) asparagine glycosylation is found at N242 and N430. The Plastocyanin-like 3 domain maps to 469–562 (IIINNLDTVI…GKLAVIVVQP (94 aa)). Cu cation-binding residues include H480, H483, and H485. Residue N503 is glycosylated (N-linked (GlcNAc...) asparagine). The Cu cation site is built by H543, C544, H545, and H549. Residues 579-604 (ANTDPNAFGPAKRSSSPSIQSSKTSS) form a disordered region. The span at 592-604 (SSSPSIQSSKTSS) shows a compositional bias: low complexity.

It belongs to the multicopper oxidase family. The cofactor is Cu cation.

The protein localises to the secreted. Its subcellular location is the cell wall. The enzyme catalyses 4 hydroquinone + O2 = 4 benzosemiquinone + 2 H2O. Functionally, laccase that catalyzes the oxidation of certain aromatic compounds, including L-dopa, to quinones, which then polymerize to melanin. Able to oxidize a wide variety of aromatic diphenol and diamino groups in the ortho, meta, and para positions but not monophenolic groups such as in phenol, tyramine, or tyrosine. Plays an important role in virulence. Plays a role in dissemination to extrapulmonary sites but is not involved in pulmonary growth or in elicitation of cellular immune responses in the lung. This is Laccase-1 from Cryptococcus neoformans var. neoformans serotype D (strain B-3501A) (Filobasidiella neoformans).